Reading from the N-terminus, the 121-residue chain is Cell division protein FtsL (121 aa).

The Cytoplasmic segment spans residues 1–34; the sequence is MISRVTEALSKVKGSMGSHERHALPGVIGDDLLR. A helical membrane pass occupies residues 35-57; it reads FGKLPLCLFICIILTAVTVVTTA. Over 58–121 the chain is Periplasmic; the sequence is HHTRLLTAQR…PSQENIVVQK (64 aa).

Belongs to the FtsL family. In terms of assembly, part of a complex composed of FtsB, FtsL and FtsQ.

The protein resides in the cell inner membrane. In terms of biological role, essential cell division protein. May link together the upstream cell division proteins, which are predominantly cytoplasmic, with the downstream cell division proteins, which are predominantly periplasmic. The sequence is that of Cell division protein FtsL from Shigella dysenteriae serotype 1 (strain Sd197).